The following is a 68-amino-acid chain: Conotoxin mr3g (68 aa).

An N-terminal signal peptide occupies residues 1 to 19 (MSKLGVLLTICLLLFALTA). Residues 20 to 51 (VPLDGDQPADRPAERMQDDISSERHPMFDAVR) constitute a propeptide that is removed on maturation. 3 cysteine pairs are disulfide-bonded: Cys53–Cys67, Cys54–Cys63, and Cys59–Cys66. 4-hydroxyproline occurs at positions 55 and 65. Position 67 is a cysteine amide (Cys67).

As to expression, expressed by the venom duct.

Its subcellular location is the secreted. In terms of biological role, intracranially injection into mice does not elicit symptoms. The sequence is that of Conotoxin mr3g from Conus marmoreus (Marble cone).